A 766-amino-acid chain; its full sequence is Probable serine/threonine-protein kinase KKQ8 (766 aa).

Disordered stretches follow at residues 1–165 (MPEH…DTSS), 201–240 (GHYA…AAQL), 277–297 (SDAN…LDLP), 362–384 (TRSH…DDPS), and 417–437 (AAKN…AGVQ). Over residues 14–25 (RSLSLGSSMRSL) the composition is skewed to low complexity. The span at 49–64 (VDIRVDTASASREHTP) shows a compositional bias: basic and acidic residues. Residues 94–120 (LTPTNSNPQSKSGSPVSQNTSQESLIT) are compositionally biased toward polar residues. The segment covering 127–137 (EDYRPSKDSRR) has biased composition (basic and acidic residues). Polar residues-rich tracts occupy residues 140 to 165 (RNAS…DTSS) and 214 to 223 (PTSSRVPSRS). The segment covering 288–297 (SKNDGHLDLP) has biased composition (basic and acidic residues). The segment covering 372–382 (DSSDDDEELDD) has biased composition (acidic residues). The segment covering 419–430 (KNKHNQSSKHRT) has biased composition (basic residues). The 304-residue stretch at 449-752 (GKCVAVVGHG…IDKLLQTGWM (304 aa)) folds into the Protein kinase domain. ATP is bound by residues 455–463 (VGHGAYGVV) and Lys493. Asp603 (proton acceptor) is an active-site residue.

The protein belongs to the protein kinase superfamily. CAMK Ser/Thr protein kinase family. NPR/HAL subfamily. HAL5 sub-subfamily.

It is found in the cytoplasm. It catalyses the reaction L-seryl-[protein] + ATP = O-phospho-L-seryl-[protein] + ADP + H(+). The enzyme catalyses L-threonyl-[protein] + ATP = O-phospho-L-threonyl-[protein] + ADP + H(+). This Candida glabrata (strain ATCC 2001 / BCRC 20586 / JCM 3761 / NBRC 0622 / NRRL Y-65 / CBS 138) (Yeast) protein is Probable serine/threonine-protein kinase KKQ8 (KKQ8).